A 183-amino-acid chain; its full sequence is Peptide deformylase (183 aa).

Cysteine 90 and histidine 132 together coordinate Fe cation. Glutamate 133 is an active-site residue. Histidine 136 lines the Fe cation pocket.

It belongs to the polypeptide deformylase family. Requires Fe(2+) as cofactor.

It catalyses the reaction N-terminal N-formyl-L-methionyl-[peptide] + H2O = N-terminal L-methionyl-[peptide] + formate. Functionally, removes the formyl group from the N-terminal Met of newly synthesized proteins. Requires at least a dipeptide for an efficient rate of reaction. N-terminal L-methionine is a prerequisite for activity but the enzyme has broad specificity at other positions. This is Peptide deformylase from Parafrankia sp. (strain EAN1pec).